Reading from the N-terminus, the 440-residue chain is MAKSQNKESYNKIFAKLKEHHKWFENSIPLIASENIPSPAVREAVISDFGNRYAEGWPGERVYAGCIYIDDVEFECMKLAKKLYKAKFADVRPISGVVANLAVYSAYSNPGDVMLAPSIPAGGHISHGKKEHSGTAGLVHGLEIEFYPFDAEEMTIDVDKTKQKVKELKKNNRLPKIAMFGGSLFLFPHPVKELSDFLKSYDMHINYDAAHVAGLIAGGKFQDPLKEGADTMTMSTHKTLFGPQGGLVLGSEKHEEPIKKATFPGLTSSHHINNMAGKAVAFAEALEFGKDYAAQVIKNAKSFAEALSDAGFKVLGESRGFTQSHQIAVNVLDYSDGGKVEADLEKANIIVNRQLIPGDIKAGRNYFHPGGIRLGVSEITRLGMKKNEMQEIASFIKQVVIEKKDPKKLLSKVKSFRKNYQKVKFCFDNKLGAYEYVKLR.

123–125 provides a ligand contact to (6S)-5,6,7,8-tetrahydrofolate; sequence GHI. Position 238 is an N6-(pyridoxal phosphate)lysine (Lys-238).

The protein belongs to the SHMT family. As to quaternary structure, homodimer. Requires pyridoxal 5'-phosphate as cofactor.

The protein localises to the cytoplasm. The protein operates within amino-acid biosynthesis; glycine biosynthesis; glycine from L-serine: step 1/1. In terms of biological role, catalyzes the reversible interconversion of serine and glycine with a modified folate serving as the one-carbon carrier. Also exhibits a pteridine-independent aldolase activity toward beta-hydroxyamino acids, producing glycine and aldehydes, via a retro-aldol mechanism. The protein is Serine hydroxymethyltransferase of Nitrosopumilus maritimus (strain SCM1).